Reading from the N-terminus, the 237-residue chain is Putative exosome complex component rrp40 (237 aa).

The 71-residue stretch at 67-137 (EDMVIGTIIE…EPEVVCLSQK (71 aa)) folds into the S1 motif domain.

The protein belongs to the RRP40 family. In terms of assembly, component of the RNA exosome complex.

It is found in the cytoplasm. Its subcellular location is the nucleus. It localises to the nucleolus. In terms of biological role, non-catalytic component of the RNA exosome complex which has 3'-&gt;5' exoribonuclease activity and participates in a multitude of cellular RNA processing and degradation events. The chain is Putative exosome complex component rrp40 (exosc3) from Dictyostelium discoideum (Social amoeba).